We begin with the raw amino-acid sequence, 264 residues long: ATP synthase subunit a (264 aa).

5 helical membrane-spanning segments follow: residues 39-59 (LDTL…FYIV), 97-117 (VAPL…MDLV), 139-159 (TADP…VIFY), 205-225 (LFGN…LPWW), and 239-259 (LLVI…YISL).

The protein belongs to the ATPase A chain family. F-type ATPases have 2 components, CF(1) - the catalytic core - and CF(0) - the membrane proton channel. CF(1) has five subunits: alpha(3), beta(3), gamma(1), delta(1), epsilon(1). CF(0) has three main subunits: a(1), b(2) and c(9-12). The alpha and beta chains form an alternating ring which encloses part of the gamma chain. CF(1) is attached to CF(0) by a central stalk formed by the gamma and epsilon chains, while a peripheral stalk is formed by the delta and b chains.

Its subcellular location is the cell inner membrane. In terms of biological role, key component of the proton channel; it plays a direct role in the translocation of protons across the membrane. The chain is ATP synthase subunit a from Coxiella burnetii (strain CbuK_Q154) (Coxiella burnetii (strain Q154)).